The sequence spans 393 residues: Zinc finger CCHC domain-containing protein 18 (393 aa).

Disordered regions lie at residues 281 to 300 (VEPE…RGTA) and 313 to 341 (DDFD…RTRK). 2 stretches are compositionally biased toward polar residues: residues 291–300 (PGASSLRGTA) and 320–331 (PSTSSGSGQRNN). Residues 346 to 363 (IRCPHCGEEGHAKETCDN) form a CCHC-type zinc finger.

This sequence belongs to the ZCCHC12 family.

In Mus musculus (Mouse), this protein is Zinc finger CCHC domain-containing protein 18.